A 576-amino-acid polypeptide reads, in one-letter code: Capsid protein (576 aa).

Positions 489–576 (GYREPKPKPG…GLLALLKEKK (88 aa)) are disordered. A compositionally biased stretch (pro residues) spans 496 to 509 (KPGPPETLIPPGAP). Positions 520–537 (TESDDFDTGDSEEEEEDH) are enriched in acidic residues. Positions 538 to 551 (QDPRWVRESLDKLT) are enriched in basic and acidic residues. The span at 562 to 576 (QQLGKGLLALLKEKK) shows a compositional bias: low complexity.

Belongs to the anelloviridae capsid protein family.

Its subcellular location is the virion. Functionally, self-assembles to form an icosahedral capsid with a T=1 symmetry, about 30 nm in diameter, and consisting of 60 capsid proteins. The capsid encapsulates the genomic DNA. Capsid protein is involved in attachment and entry into the host cell. The polypeptide is Capsid protein (Torque teno canis virus (isolate Cf-TTV10)).